A 514-amino-acid polypeptide reads, in one-letter code: Glutamate--cysteine ligase (514 aa).

Belongs to the glutamate--cysteine ligase type 1 family. Type 1 subfamily.

The catalysed reaction is L-cysteine + L-glutamate + ATP = gamma-L-glutamyl-L-cysteine + ADP + phosphate + H(+). It functions in the pathway sulfur metabolism; glutathione biosynthesis; glutathione from L-cysteine and L-glutamate: step 1/2. This is Glutamate--cysteine ligase from Enterobacter sp. (strain 638).